Consider the following 93-residue polypeptide: Early nodulin-12A (93 aa).

The first 24 residues, 1–24 (MASFLLSILVFFLSALVLVPQGFA), serve as a signal peptide directing secretion. Positions 30–93 (PAYRPPQTEP…HPPSEDNIHF (64 aa)) are disordered. A run of 10 repeats spans residues 34 to 38 (PPQTE), 39 to 43 (PPVHK), 44 to 48 (PPHKE), 49 to 53 (PPVHK), 54 to 58 (PPHKD), 59 to 63 (PPVNK), 64 to 68 (PPQKE), 69 to 73 (PPVHK), 74 to 78 (PPRKE), and 79 to 83 (PPTHR). Residues 34-83 (PPQTEPPVHKPPHKEPPVHKPPHKDPPVNKPPQKEPPVHKPPRKEPPTHR) form a 10 X 5 AA tandem repeats of P-P-[HQVRT]-[HKNT]-[DEKR] region. Residues 46 to 93 (HKEPPVHKPPHKDPPVNKPPQKEPPVHKPPRKEPPTHRHPPSEDNIHF) show a composition bias toward basic and acidic residues.

Belongs to the plant proline-rich protein superfamily. ENOD12 family. More abundant in the young nodules than the mature nodules.

It localises to the secreted. It is found in the cell wall. Functionally, involved in the infection process during the plant-rhizobium interaction. The sequence is that of Early nodulin-12A (ENOD12A) from Medicago sativa (Alfalfa).